A 362-amino-acid chain; its full sequence is Peptide chain release factor 1 (362 aa).

Glutamine 240 bears the N5-methylglutamine mark.

This sequence belongs to the prokaryotic/mitochondrial release factor family. In terms of processing, methylated by PrmC. Methylation increases the termination efficiency of RF1.

The protein localises to the cytoplasm. Peptide chain release factor 1 directs the termination of translation in response to the peptide chain termination codons UAG and UAA. The polypeptide is Peptide chain release factor 1 (Bifidobacterium longum (strain NCC 2705)).